Reading from the N-terminus, the 45-residue chain is Mu-conotoxin-like Cal 12.1.2a (45 aa).

4 disulfide bridges follow: cysteine 3–cysteine 16, cysteine 11–cysteine 28, cysteine 18–cysteine 33, and cysteine 27–cysteine 39. Residue proline 23 is modified to 4-hydroxyproline. 6'-bromotryptophan occurs at positions 37 and 38. Proline 40 carries the 4-hydroxyproline modification. Residue tryptophan 44 is modified to 6'-bromotryptophan.

In terms of tissue distribution, expressed by the venom duct.

It is found in the secreted. Its function is as follows. Mu-conotoxins block voltage-gated sodium channels. This toxin reversibly blocks voltage-gated sodium channel in cephalopods, with no alteration in the voltage dependence of sodium conductance or on the kinetics of inactivation. The protein is Mu-conotoxin-like Cal 12.1.2a of Californiconus californicus (California cone).